The following is a 1409-amino-acid chain: L-2-aminoadipate reductase large subunit (1409 aa).

One can recognise a Carrier domain in the interval 858–937 (QALSETEQTL…GFASEIDRLL (80 aa)). Residue S896 is modified to O-(pantetheine 4'-phosphoryl)serine.

It belongs to the ATP-dependent AMP-binding enzyme family. As to quaternary structure, heterodimer of an alpha and a beta subunit. It depends on pantetheine 4'-phosphate as a cofactor.

The enzyme catalyses (S)-2-amino-6-oxohexanoate + NADP(+) + H2O = L-2-aminoadipate + NADPH + 2 H(+). It carries out the reaction (S)-2-amino-6-oxohexanoate + NAD(+) + H2O = L-2-aminoadipate + NADH + 2 H(+). It catalyses the reaction (S)-2-amino-6-oxohexanoate + AMP + diphosphate + NADP(+) = L-2-aminoadipate + ATP + NADPH + H(+). It participates in amino-acid biosynthesis; L-lysine biosynthesis via AAA pathway; L-lysine from L-alpha-aminoadipate (fungal route): step 1/3. Catalyzes the activation of alpha-aminoadipate by ATP-dependent adenylation and the reduction of activated alpha-aminoadipate by NADPH. The activated alpha-aminoadipate is bound to the phosphopantheinyl group of the enzyme itself before it is reduced to (S)-2-amino-6-oxohexanoate. This is L-2-aminoadipate reductase large subunit (lys2) from Penicillium chrysogenum (Penicillium notatum).